The following is a 32-amino-acid chain: uncharacterized protein (32 aa).

The helical transmembrane segment at 3–23 threads the bilayer; that stretch reads IGIIFPVVIFITAVVFLAWFF.

It localises to the cell inner membrane. This is an uncharacterized protein from Escherichia coli (strain K12).